Reading from the N-terminus, the 757-residue chain is Exo-alpha-(1-&gt;6)-L-arabinopyranosidase (757 aa).

Residue aspartate 232 is part of the active site.

Belongs to the glycosyl hydrolase 3 family. As to quaternary structure, homotetramer.

With respect to regulation, completely inhibited by Cu(2+) and Fe(2+). Catalyzes the hydrolysis of a non-reducing terminal alpha-L-arabinopyranosidic linkage in ginsenoside Rb2 (alpha-L-arabinopyranosyl-(1-&gt;6)-alpha-D-glucopyranosyl) to release alpha-D-glucopyranosyl (Rd). It is not able to hydrolyze alpha-L-arabinofuranosyl-(1-&gt;6)-alpha-D-glucopyranosyl (Rc). This chain is Exo-alpha-(1-&gt;6)-L-arabinopyranosidase, found in Bifidobacterium breve (strain ACS-071-V-Sch8b).